A 164-amino-acid chain; its full sequence is Crossover junction endodeoxyribonuclease RuvC (164 aa).

Active-site residues include Asp7, Glu67, and Asp139. 3 residues coordinate Mg(2+): Asp7, Glu67, and Asp139.

It belongs to the RuvC family. In terms of assembly, homodimer which binds Holliday junction (HJ) DNA. The HJ becomes 2-fold symmetrical on binding to RuvC with unstacked arms; it has a different conformation from HJ DNA in complex with RuvA. In the full resolvosome a probable DNA-RuvA(4)-RuvB(12)-RuvC(2) complex forms which resolves the HJ. Mg(2+) is required as a cofactor.

The protein resides in the cytoplasm. It catalyses the reaction Endonucleolytic cleavage at a junction such as a reciprocal single-stranded crossover between two homologous DNA duplexes (Holliday junction).. The RuvA-RuvB-RuvC complex processes Holliday junction (HJ) DNA during genetic recombination and DNA repair. Endonuclease that resolves HJ intermediates. Cleaves cruciform DNA by making single-stranded nicks across the HJ at symmetrical positions within the homologous arms, yielding a 5'-phosphate and a 3'-hydroxyl group; requires a central core of homology in the junction. The consensus cleavage sequence is 5'-(A/T)TT(C/G)-3'. Cleavage occurs on the 3'-side of the TT dinucleotide at the point of strand exchange. HJ branch migration catalyzed by RuvA-RuvB allows RuvC to scan DNA until it finds its consensus sequence, where it cleaves and resolves the cruciform DNA. The protein is Crossover junction endodeoxyribonuclease RuvC of Citrifermentans bemidjiense (strain ATCC BAA-1014 / DSM 16622 / JCM 12645 / Bem) (Geobacter bemidjiensis).